The chain runs to 532 residues: Flavin-containing monooxygenase 1 (532 aa).

Residues 1-510 (MVKRVAIVGA…TRTVQETPST (510 aa)) lie on the Lumenal side of the membrane. FAD is bound by residues 9 to 13 (GAGVS), glutamate 32, 40 to 41 (LW), and 61 to 62 (NS). NADP(+) is bound by residues 60–61 (SN) and 195–198 (SGTD). The helical transmembrane segment at 511-531 (FETLLKLFSFLALLVAVFFIF) threads the bilayer. Residue leucine 532 is a topological domain, cytoplasmic.

The protein belongs to the FMO family. FAD is required as a cofactor. Expressed in liver, lung and kidney and to a lesser extent in the heart and brain.

The protein resides in the endoplasmic reticulum membrane. The catalysed reaction is hypotaurine + NADPH + O2 + H(+) = taurine + NADP(+) + H2O. It carries out the reaction hypotaurine + NADH + O2 + H(+) = taurine + NAD(+) + H2O. It catalyses the reaction trimethylamine + NADPH + O2 = trimethylamine N-oxide + NADP(+) + H2O. The enzyme catalyses N,N-dimethylaniline + NADPH + O2 + H(+) = N,N-dimethylaniline N-oxide + NADP(+) + H2O. Broad spectrum monooxygenase that catalyzes the oxygenation of a wide variety of nitrogen- and sulfur-containing compounds including xenobiotics. Catalyzes the S-oxygenation of hypotaurine to produce taurine, an organic osmolyte involved in cell volume regulation as well as a variety of cytoprotective and developmental processes. In vitro, catalyzes the N-oxygenation of trimethylamine (TMA) to produce trimethylamine N-oxide (TMAO) and could therefore participate to the detoxification of this compound that is generated by the action of gut microbiota from dietary precursors such as choline, choline containing compounds, betaine or L-carnitine. The protein is Flavin-containing monooxygenase 1 of Rattus norvegicus (Rat).